Here is an 803-residue protein sequence, read N- to C-terminus: Zinc finger X-linked protein ZXDB (803 aa).

Disordered stretches follow at residues 1-91 (MEIP…GGDD), 120-140 (EAEEGPGLQGGESGANPAGPT), and 218-260 (AAHP…GPRG). Positions 13-26 (LQGGGGGGIPAGGG) are enriched in gly residues. 10 consecutive C2H2-type zinc fingers follow at residues 271–295 (YLCPEAQCGQTFAKKHQLKVHLLTH), 304–328 (FKCPLGGCGWTFTTSYKLKRHLQSH), 334–358 (FGCPAEGCGKSFTTVYNLKAHMKGH), 364–386 (FKCEVCEESFPTQAKLSAHQRSH), 393–417 (YQCAFSGCKKTFITVSALFSHNRAH), 424–448 (FSCSFPGCSKQYDKACRLKIHLRSH), 454–478 (FLCDFDGCGWNFTSMSKLLRHKRKH), 484–508 (FMCPVEGCGKSFTRAEHLKGHSITH), 514–538 (FVCPVAGCCARFSARSSLYIHSKKH), and 547–572 (SRCPISSCNKLFTSKHSMKTHMVKRH). Residues 271-577 (YLCPEAQCGQ…MVKRHKVGQD (307 aa)) form a required for interaction with ZXDC region. Residues 576-703 (QDLLAQLEAA…NMDEVSSVSV (128 aa)) are required for transcriptional activation.

The protein belongs to the ZXD family. As to quaternary structure, self-associates. Interacts with ZXDC and CIITA. In terms of tissue distribution, may be expressed in brain, heart, kidney, liver, lung, muscle and placenta.

It is found in the nucleus. Its function is as follows. Cooperates with CIITA to promote transcription of MHC class I and MHC class II genes. The polypeptide is Zinc finger X-linked protein ZXDB (ZXDB) (Homo sapiens (Human)).